The chain runs to 311 residues: Putative F-box protein At1g31090 (311 aa).

The F-box domain occupies 4–53 (GANSDSIPTDLIYEILSRLSVKPITRFRCVSKLWESIICRQDFTELFHNR). Residues 287–311 (RPAEQNTSTSSREDHLVRTVKRKRA) are disordered.

This Arabidopsis thaliana (Mouse-ear cress) protein is Putative F-box protein At1g31090.